A 493-amino-acid polypeptide reads, in one-letter code: Occludin (493 aa).

Over 1–47 the chain is Cytoplasmic; sequence MYSRPSNYAPSKDVYGGEMRSQPAYSYYPEEEIQHFYRWSSPPGIIK. The region spanning 41–250 is the MARVEL domain; sequence SPPGIIKIMS…IIFFAVKTRK (210 aa). A helical membrane pass occupies residues 48–70; that stretch reads IMSILIVVMCVGIFACVASTLPW. Residues 71 to 116 lie on the Extracellular side of the membrane; that stretch reads DLDITGQSMGYGMGSGSYSGGYTGYGFGGSQMGLGFAYGGNYTDPR. A helical transmembrane segment spans residues 117 to 141; it reads AAKGFILAMAAFCFIIGLVIFVMLV. The Cytoplasmic segment spans residues 142-151; the sequence is TRTPLSTSRK. A helical membrane pass occupies residues 152-176; the sequence is FYLIVIIVSAIIGGLVFIATIVYTV. The Extracellular segment spans residues 177-224; that stretch reads GVNPVAQASGSAFYTQIVSICNQFYSPVQTGVFVNQYLYHYCVVEPQE. Cys-197 and Cys-218 form a disulfide bridge. The helical transmembrane segment at 225 to 246 threads the bilayer; it reads AIAIVLGFLIVVAFAIIIFFAV. Residues 247–493 are Cytoplasmic-facing; that stretch reads KTRKKINQYG…IKQMVSNYDK (247 aa). Positions 334–407 are disordered; it reads YGMSPRHYSS…TKQRQEYKQE (74 aa). Over residues 352-361 the composition is skewed to basic residues; that stretch reads APPKKRPGKP. Position 375 is a phosphothreonine; by CK2; in vitro (Thr-375). The residue at position 379 (Ser-379) is a Phosphoserine; by CK2; in vitro. Over residues 379–389 the composition is skewed to acidic residues; it reads SADELEDDSWD. In terms of domain architecture, OCEL spans 386–493; it reads DSWDSEYPPI…IKQMVSNYDK (108 aa). Positions 396-428 form a coiled coil; the sequence is TQTKQRQEYKQEFASDLHEYKRLQAELDELSKI.

It belongs to the ELL/occludin family. As to quaternary structure, interacts in vitro with cingulin, possibly directly. Interacts with ZO-1. Phosphorylated. As to expression, localized at tight junctions of both epithelial and endothelial cells.

Its subcellular location is the cell membrane. The protein resides in the cell junction. It is found in the tight junction. Functionally, probably plays a role in the formation and regulation of the tight junction (TJ) paracellular permeability barrier. The polypeptide is Occludin (ocln) (Xenopus laevis (African clawed frog)).